A 505-amino-acid polypeptide reads, in one-letter code: Serine/threonine protein kinase OSK1 (505 aa).

A Protein kinase domain is found at 14–266 (YRIGKTLGIG…IREIREHQWF (253 aa)). ATP-binding positions include 20–28 (LGIGSFGKV) and Lys-43. Asp-137 (proton acceptor) is an active-site residue. Residues 287-327 (KLDDETLNDVINMGFDKNQLIESLHKRLQNEATVAYYLLLD) enclose the UBA domain. Polar residues predominate over residues 347–361 (SSLAQVTPAETPNSA). The tract at residues 347–372 (SSLAQVTPAETPNSATDHRQHGHMES) is disordered. A KA1 domain is found at 456–504 (SEKSTHTVKFEIQLYKTRDEKYLLDLQRVSGPQLLFLDLCSAFLTQLRV).

This sequence belongs to the protein kinase superfamily. Ser/Thr protein kinase family. In terms of tissue distribution, expressed in young roots, young shoots, flowers, and immature seeds. Mostly expressed in leaf sheaths and roots, and to a lower extent, in germinating seeds, leaf blades and panicles.

Its subcellular location is the nucleus. It catalyses the reaction L-seryl-[protein] + ATP = O-phospho-L-seryl-[protein] + ADP + H(+). The catalysed reaction is L-threonyl-[protein] + ATP = O-phospho-L-threonyl-[protein] + ADP + H(+). In terms of biological role, serine/threonine-protein kinase involved in sugar signaling during germination and seedling growth. Negative regulators of sugar response complex (SRC) in alpha-amylase gene promoters, thus relieving SRC sugar repression in a MYBS1-dependent manner. Required for MYBS1 and AAMY3 accumulation under glucose starvation. The sequence is that of Serine/threonine protein kinase OSK1 from Oryza sativa subsp. japonica (Rice).